Consider the following 426-residue polypeptide: Dihydroorotase (426 aa).

Zn(2+)-binding residues include histidine 58 and histidine 60. Residues histidine 60–arginine 62 and asparagine 92 each bind substrate. 3 residues coordinate Zn(2+): aspartate 150, histidine 177, and histidine 230. Asparagine 276 contacts substrate. Residue aspartate 303 participates in Zn(2+) binding. Residue aspartate 303 is part of the active site. Residues histidine 307 and phenylalanine 321–glycine 322 contribute to the substrate site.

Belongs to the metallo-dependent hydrolases superfamily. DHOase family. Class I DHOase subfamily. Zn(2+) serves as cofactor.

It catalyses the reaction (S)-dihydroorotate + H2O = N-carbamoyl-L-aspartate + H(+). It functions in the pathway pyrimidine metabolism; UMP biosynthesis via de novo pathway; (S)-dihydroorotate from bicarbonate: step 3/3. Catalyzes the reversible cyclization of carbamoyl aspartate to dihydroorotate. In Listeria monocytogenes serotype 4b (strain CLIP80459), this protein is Dihydroorotase.